The following is a 252-amino-acid chain: Trans-aconitate 2-methyltransferase (252 aa).

It belongs to the methyltransferase superfamily. Tam family.

The protein localises to the cytoplasm. The enzyme catalyses trans-aconitate + S-adenosyl-L-methionine = (E)-3-(methoxycarbonyl)pent-2-enedioate + S-adenosyl-L-homocysteine. Functionally, catalyzes the S-adenosylmethionine monomethyl esterification of trans-aconitate. The polypeptide is Trans-aconitate 2-methyltransferase (Shigella dysenteriae serotype 1 (strain Sd197)).